Reading from the N-terminus, the 254-residue chain is tRNA pseudouridine synthase A (254 aa).

Aspartate 52 (nucleophile) is an active-site residue. Tyrosine 110 lines the substrate pocket.

The protein belongs to the tRNA pseudouridine synthase TruA family. Homodimer.

The enzyme catalyses uridine(38/39/40) in tRNA = pseudouridine(38/39/40) in tRNA. Its function is as follows. Formation of pseudouridine at positions 38, 39 and 40 in the anticodon stem and loop of transfer RNAs. In Thermodesulfovibrio yellowstonii (strain ATCC 51303 / DSM 11347 / YP87), this protein is tRNA pseudouridine synthase A.